Here is a 600-residue protein sequence, read N- to C-terminus: Elongation factor 4 (600 aa).

The 183-residue stretch at 5–187 (KYIRNFSIVA…EIVEKVPAPE (183 aa)) folds into the tr-type G domain. Residues 17–22 (DHGKST) and 134–137 (NKVD) each bind GTP.

Belongs to the TRAFAC class translation factor GTPase superfamily. Classic translation factor GTPase family. LepA subfamily.

Its subcellular location is the cell membrane. The enzyme catalyses GTP + H2O = GDP + phosphate + H(+). Functionally, required for accurate and efficient protein synthesis under certain stress conditions. May act as a fidelity factor of the translation reaction, by catalyzing a one-codon backward translocation of tRNAs on improperly translocated ribosomes. Back-translocation proceeds from a post-translocation (POST) complex to a pre-translocation (PRE) complex, thus giving elongation factor G a second chance to translocate the tRNAs correctly. Binds to ribosomes in a GTP-dependent manner. This is Elongation factor 4 from Clostridium perfringens (strain ATCC 13124 / DSM 756 / JCM 1290 / NCIMB 6125 / NCTC 8237 / Type A).